The chain runs to 518 residues: Glutamate--cysteine ligase (518 aa).

Belongs to the glutamate--cysteine ligase type 1 family. Type 1 subfamily.

The enzyme catalyses L-cysteine + L-glutamate + ATP = gamma-L-glutamyl-L-cysteine + ADP + phosphate + H(+). The protein operates within sulfur metabolism; glutathione biosynthesis; glutathione from L-cysteine and L-glutamate: step 1/2. This is Glutamate--cysteine ligase from Escherichia coli O7:K1 (strain IAI39 / ExPEC).